Here is a 195-residue protein sequence, read N- to C-terminus: ATP-dependent Clp protease proteolytic subunit (195 aa).

Catalysis depends on Ser97, which acts as the Nucleophile. Residue His122 is part of the active site.

The protein belongs to the peptidase S14 family. As to quaternary structure, fourteen ClpP subunits assemble into 2 heptameric rings which stack back to back to give a disk-like structure with a central cavity, resembling the structure of eukaryotic proteasomes.

The protein resides in the cytoplasm. It carries out the reaction Hydrolysis of proteins to small peptides in the presence of ATP and magnesium. alpha-casein is the usual test substrate. In the absence of ATP, only oligopeptides shorter than five residues are hydrolyzed (such as succinyl-Leu-Tyr-|-NHMec, and Leu-Tyr-Leu-|-Tyr-Trp, in which cleavage of the -Tyr-|-Leu- and -Tyr-|-Trp bonds also occurs).. Cleaves peptides in various proteins in a process that requires ATP hydrolysis. Has a chymotrypsin-like activity. Plays a major role in the degradation of misfolded proteins. This is ATP-dependent Clp protease proteolytic subunit from Campylobacter hominis (strain ATCC BAA-381 / DSM 21671 / CCUG 45161 / LMG 19568 / NCTC 13146 / CH001A).